The primary structure comprises 217 residues: UPF0502 protein VFMJ11_A0613 (217 aa).

Belongs to the UPF0502 family.

The sequence is that of UPF0502 protein VFMJ11_A0613 from Aliivibrio fischeri (strain MJ11) (Vibrio fischeri).